The following is a 419-amino-acid chain: Hyaluronan synthase (419 aa).

Transmembrane regions (helical) follow at residues 8-28 (LIVL…MYLF), 33-53 (VGIY…LSFL), 318-338 (IVAL…VAIG), 345-365 (AIQL…IVAL), and 376-396 (PASF…LQPL).

The protein belongs to the NodC/HAS family. Mg(2+) serves as cofactor.

It is found in the cell membrane. The catalysed reaction is [hyaluronan](n) + UDP-N-acetyl-alpha-D-glucosamine = N-acetyl-beta-D-glucosaminyl-(1-&gt;4)-[hyaluronan](n) + UDP + H(+). It carries out the reaction N-acetyl-beta-D-glucosaminyl-(1-&gt;4)-[hyaluronan](n) + UDP-alpha-D-glucuronate = [hyaluronan](n+1) + UDP + H(+). Its pathway is glycan biosynthesis; hyaluronan biosynthesis. Functionally, glycosaminoglycan synthesis. The hyaluronic acid capsule is involved in the pathogenicity of group A Streptococci; it may be the major virulence determinant. This Streptococcus pyogenes serotype M3 (strain ATCC BAA-595 / MGAS315) protein is Hyaluronan synthase (hasA).